The primary structure comprises 326 residues: Aspartate--ammonia ligase (326 aa).

The protein belongs to the class-II aminoacyl-tRNA synthetase family. AsnA subfamily.

It localises to the cytoplasm. It catalyses the reaction L-aspartate + NH4(+) + ATP = L-asparagine + AMP + diphosphate + H(+). It functions in the pathway amino-acid biosynthesis; L-asparagine biosynthesis; L-asparagine from L-aspartate (ammonia route): step 1/1. The protein is Aspartate--ammonia ligase of Malacoplasma penetrans (strain HF-2) (Mycoplasma penetrans).